We begin with the raw amino-acid sequence, 1603 residues long: Transcription factor Gibbin (1603 aa).

4 disordered regions span residues 19–108, 150–236, 264–285, and 394–467; these read PDYL…SSSR, LRLS…STDY, LEPP…FLDP, and CRRR…RKGK. Positions 30–47 are enriched in pro residues; it reads GGPPTPRPLLPTRPPASP. An N6-acetyllysine modification is found at K79. Positions 166-178 are enriched in polar residues; it reads SFFSSPSLANSIR. Positions 179–194 are enriched in basic and acidic residues; the sequence is SPEERATPHAKSERPS. Low complexity predominate over residues 216-225; that stretch reads PGATAAATGL. A Phosphoserine modification is found at S268. Residues 273-285 show a composition bias toward low complexity; it reads PQLLDPQPRFLDP. The a.T hook 1 DNA-binding region spans 396–408; the sequence is RRKAGRGRKADAG. A compositionally biased stretch (pro residues) spans 428 to 446; sequence EPPPPPPPPPPALPGPGPV. Positions 544–556 form a DNA-binding region, a.T hook 2; it reads KRKRGRPPKNLLL. The interval 581-607 is disordered; sequence MPEVKKRRRRKQKLASPQPSYAADAND. Phosphoserine is present on S596. A Glycyl lysine isopeptide (Lys-Gly) (interchain with G-Cter in SUMO2) cross-link involves residue K609. Disordered regions lie at residues 717–792 and 806–827; these read LTEL…RNCG and LESG…GQTE. Basic residues predominate over residues 737–746; it reads KPKRKRRSRK. Polar residues predominate over residues 816 to 827; it reads YYSTGAPSGQTE. A phosphoserine mark is found at S829 and S846. Position 891 is an omega-N-methylarginine (R891). Phosphoserine is present on residues S896 and S1064. Disordered regions lie at residues 1159-1198 and 1253-1286; these read VSET…QSSL and ASAA…KKER. Composition is skewed to low complexity over residues 1160–1171 and 1187–1198; these read SETFSESSSDST and SEASSSEGQSSL. A Phosphoserine modification is found at S1187. Phosphoserine occurs at positions 1322, 1324, and 1399. T1401 carries the post-translational modification Phosphothreonine. S1403 carries the post-translational modification Phosphoserine. K1409 is covalently cross-linked (Glycyl lysine isopeptide (Lys-Gly) (interchain with G-Cter in SUMO2)). The interval 1503 to 1533 is disordered; sequence PHLASPPATPKADKEPLEMARPPGPPRGPAA. S1507 and S1549 each carry phosphoserine.

The protein localises to the nucleus. It is found in the chromosome. Functionally, transcription factor required for the proper patterning of the epidermis, which plays a key role in early epithelial morphogenesis. Directly binds promoter and enhancer regions and acts by maintaining local enhancer-promoter chromatin architecture. Interacts with many sequence-specific zinc-finger transcription factors and methyl-CpG-binding proteins to regulate the expression of mesoderm genes that wire surface ectoderm stratification. The protein is Transcription factor Gibbin of Homo sapiens (Human).